A 305-amino-acid chain; its full sequence is Tetraspanin-12 (305 aa).

Residues methionine 1–cysteine 12 lie on the Cytoplasmic side of the membrane. Residues cysteine 9 and cysteine 12 are each lipidated (S-palmitoyl cysteine). The chain crosses the membrane as a helical span at residues leucine 13 to alanine 33. At tryptophan 34 to tyrosine 59 the chain is on the extracellular side. A helical membrane pass occupies residues phenylalanine 60–leucine 80. Topologically, residues glycine 81–asparagine 89 are cytoplasmic. A lipid anchor (S-palmitoyl cysteine) is attached at cysteine 83. Residues leucine 90 to cysteine 110 traverse the membrane as a helical segment. Residues glycine 111 to arginine 224 are Extracellular-facing. Residues phenylalanine 225–leucine 245 traverse the membrane as a helical segment. The Cytoplasmic segment spans residues tryptophan 246 to leucine 305.

This sequence belongs to the tetraspanin (TM4SF) family. As to quaternary structure, component of a complex, at least composed of TSPAN12, FZD4 and norrin (NDP). Palmitoylated; required for interaction with ADAM10. The precise position of palmitoylated residues is unclear and occurs either on Cys-9, Cys-12 and/or Cys-83.

The protein resides in the cell membrane. Functionally, regulator of cell surface receptor signal transduction. Plays a central role in retinal vascularization by regulating norrin (NDP) signal transduction. Acts in concert with norrin (NDP) to promote FZD4 multimerization and subsequent activation of FZD4, leading to promote accumulation of beta-catenin (CTNNB1) and stimulate LEF/TCF-mediated transcriptional programs. Suprisingly, it only activates the norrin (NDP)-dependent activation of FZD4, while it does not activate the Wnt-dependent activation of FZD4, suggesting the existence of a Wnt-independent signaling that also promote accumulation the beta-catenin (CTNNB1). This is Tetraspanin-12 (TSPAN12) from Gallus gallus (Chicken).